We begin with the raw amino-acid sequence, 160 residues long: Protein cornichon homolog 2 (160 aa).

Topologically, residues M1–Y10 are cytoplasmic. Residues M11 to F31 traverse the membrane as a helical segment. At D32–Y72 the chain is on the lumenal side. Residues C73–L93 traverse the membrane as a helical segment. Over N94 to K138 the chain is Cytoplasmic. The helical transmembrane segment at L139–S159 threads the bilayer. A topological domain (lumenal) is located at residue F160.

The protein belongs to the cornichon family. In terms of assembly, interacts with HBEGF. Expressed in the odd-numbered neuromeres (r3 and r5) of the developing hindbrain.

Its subcellular location is the membrane. Its function is as follows. Regulates the trafficking and gating properties of AMPA-selective glutamate receptors (AMPARs). Plays an important role in the proper development of cranial nerves by facilitating the secretion of HBEGF. The protein is Protein cornichon homolog 2 (CNIH2) of Gallus gallus (Chicken).